Reading from the N-terminus, the 222-residue chain is Riboflavin kinase (222 aa).

Residues 1 to 94 (METIDAEDAA…AKIFDVKDEQ (94 aa)) are H-T-H motif-like. A riboflavin kinase region spans residues 95–222 (YVLTGTVMSG…ENSEVVVVIG (128 aa)). 104–109 (GVGEGR) contributes to the CDP binding site. Mg(2+) contacts are provided by threonine 133 and asparagine 135. FMN-binding residues include threonine 190 and glutamate 198. A CDP-binding site is contributed by 203-206 (TQLR).

The protein belongs to the archaeal riboflavin kinase family. Requires Mg(2+) as cofactor.

The catalysed reaction is riboflavin + CTP = CDP + FMN + H(+). It functions in the pathway cofactor biosynthesis; FMN biosynthesis; FMN from riboflavin (CTP route): step 1/1. Its function is as follows. Catalyzes the CTP-dependent phosphorylation of riboflavin (vitamin B2) to form flavin mononucleotide (FMN). The sequence is that of Riboflavin kinase (ribK) from Methanocorpusculum labreanum (strain ATCC 43576 / DSM 4855 / Z).